Consider the following 207-residue polypeptide: Ribonuclease HII (207 aa).

The region spanning 20–207 (QLFAGVDEVG…KPVKRVLGIE (188 aa)) is the RNase H type-2 domain. Residues aspartate 26, glutamate 27, and aspartate 118 each contribute to the a divalent metal cation site.

It belongs to the RNase HII family. Mn(2+) serves as cofactor. Mg(2+) is required as a cofactor.

The protein resides in the cytoplasm. The catalysed reaction is Endonucleolytic cleavage to 5'-phosphomonoester.. Endonuclease that specifically degrades the RNA of RNA-DNA hybrids. The protein is Ribonuclease HII of Aliivibrio salmonicida (strain LFI1238) (Vibrio salmonicida (strain LFI1238)).